We begin with the raw amino-acid sequence, 677 residues long: Protein PALS1 (677 aa).

The interval 1–347 (MTTSHMNGYV…AQIKSPPIKE (347 aa)) is required for the correct localization of PALS1 and PATJ at cell-cell contacts and the normal formation of tight junctions and adherens junctions. Residues 39–81 (ELGARTLPVRRSAQLEKIRQQQEDRRRREEEGRSRQELDLNSS) form a disordered region. The span at 51–76 (AQLEKIRQQQEDRRRREEEGRSRQEL) shows a compositional bias: basic and acidic residues. L27 domains follow at residues 121–178 (ALLE…NRPS) and 180–236 (PYPL…MQLE). The region spanning 258–338 (IVRIEKAKDI…VLSFVLIPSA (81 aa)) is the PDZ domain. The SH3 domain occupies 347 to 419 (ETVVHVKAHF…PGKSFQQQRE (73 aa)). The Guanylate kinase-like domain occupies 481–662 (KRPIALIGPP…SYQELLRLIN (182 aa)). 488–495 (GPPNCGQN) provides a ligand contact to ATP. Positions 506 to 526 (PDRFAGPVPHTTRSRRDAEAN) are disordered.

It belongs to the MAGUK family. As to expression, expressed in the retina and in the neural tube.

The protein resides in the apical cell membrane. It is found in the cell junction. Its subcellular location is the tight junction. Plays a role in tight junction biogenesis and in the establishment of cell polarity in epithelial cells. Also involved in adherens junction biogenesis. Required for polarized epithelial organization, cell-cell adhesion and remodeling of myocardial cells during heart tube elongation during embryogenesis. Functions in cellular patterning of the retina and development of the retinal pigmented epithelium. Also required for embryo body axis specification. This chain is Protein PALS1 (pals1a), found in Danio rerio (Zebrafish).